Consider the following 1067-residue polypeptide: Hemoglobin and hemoglobin-haptoglobin-binding protein B (1067 aa).

The signal sequence occupies residues 1–24; the sequence is MTNFKFSLLACSIAFALNASTAYA. 6 tandem repeats follow at residues 26-29, 30-33, 34-37, 38-41, 42-45, and 46-49. The 6 X 4 AA tandem repeats of Q-P-T-N stretch occupies residues 26 to 49; sequence QPTNQPTNQPTNQPTNQPTNQPTN. Residues 26-51 are compositionally biased toward low complexity; that stretch reads QPTNQPTNQPTNQPTNQPTNQPTNQN. Residues 26–53 form a disordered region; the sequence is QPTNQPTNQPTNQPTNQPTNQPTNQNSN. The TonB box motif lies at 59-66; sequence EQINVSGS. The TBDR plug domain occupies 71–196; that stretch reads NIKEKKVGET…LGGSVIFETK (126 aa). Residues 204-1067 enclose the TBDR beta-barrel domain; that stretch reads DKDYYLSYKR…NYRMSVQFEF (864 aa). The TonB C-terminal box signature appears at 1050–1067; that stretch reads NRFYAPGRNYRMSVQFEF.

Belongs to the TonB-dependent receptor family. Hemoglobin/haptoglobin binding protein subfamily.

The protein localises to the cell outer membrane. Functionally, acts as a receptor for hemoglobin or the hemoglobin/haptoglobin complex of the human host and is required for heme uptake. The sequence is that of Hemoglobin and hemoglobin-haptoglobin-binding protein B (hgbB) from Haemophilus influenzae.